The sequence spans 414 residues: Ribulose bisphosphate carboxylase large chain (414 aa).

The substrate site is built by Asn100 and Thr150. The Proton acceptor role is filled by Lys152. Lys154 contacts substrate. Mg(2+) is bound by residues Lys178, Asp180, and Glu181. Lys178 carries the post-translational modification N6-carboxylysine. His271 (proton acceptor) is an active-site residue. Positions 272, 304, and 356 each coordinate substrate.

This sequence belongs to the RuBisCO large chain family. Type I subfamily. In terms of assembly, heterohexadecamer of 8 large chains and 8 small chains; disulfide-linked. The disulfide link is formed within the large subunit homodimers. Requires Mg(2+) as cofactor. In terms of processing, the disulfide bond which can form in the large chain dimeric partners within the hexadecamer appears to be associated with oxidative stress and protein turnover.

The protein resides in the plastid. It is found in the chloroplast. It carries out the reaction 2 (2R)-3-phosphoglycerate + 2 H(+) = D-ribulose 1,5-bisphosphate + CO2 + H2O. It catalyses the reaction D-ribulose 1,5-bisphosphate + O2 = 2-phosphoglycolate + (2R)-3-phosphoglycerate + 2 H(+). Functionally, ruBisCO catalyzes two reactions: the carboxylation of D-ribulose 1,5-bisphosphate, the primary event in carbon dioxide fixation, as well as the oxidative fragmentation of the pentose substrate in the photorespiration process. Both reactions occur simultaneously and in competition at the same active site. The sequence is that of Ribulose bisphosphate carboxylase large chain (rbcL) from Blechnopsis orientalis (Fish fern).